The primary structure comprises 460 residues: Serine--tRNA ligase (460 aa).

An L-serine-binding site is contributed by 255 to 257 (TAE). ATP contacts are provided by residues 286 to 288 (RKE) and V302. E309 provides a ligand contact to L-serine. 373–376 (EMVS) serves as a coordination point for ATP. Residue T409 participates in L-serine binding.

It belongs to the class-II aminoacyl-tRNA synthetase family. Type-1 seryl-tRNA synthetase subfamily. Homodimer. The tRNA molecule binds across the dimer.

It localises to the cytoplasm. It carries out the reaction tRNA(Ser) + L-serine + ATP = L-seryl-tRNA(Ser) + AMP + diphosphate + H(+). It catalyses the reaction tRNA(Sec) + L-serine + ATP = L-seryl-tRNA(Sec) + AMP + diphosphate + H(+). The protein operates within aminoacyl-tRNA biosynthesis; selenocysteinyl-tRNA(Sec) biosynthesis; L-seryl-tRNA(Sec) from L-serine and tRNA(Sec): step 1/1. In terms of biological role, catalyzes the attachment of serine to tRNA(Ser). Is also able to aminoacylate tRNA(Sec) with serine, to form the misacylated tRNA L-seryl-tRNA(Sec), which will be further converted into selenocysteinyl-tRNA(Sec). The chain is Serine--tRNA ligase from Hyperthermus butylicus (strain DSM 5456 / JCM 9403 / PLM1-5).